The primary structure comprises 185 residues: Ribosome-recycling factor (185 aa).

The protein belongs to the RRF family.

The protein resides in the cytoplasm. Responsible for the release of ribosomes from messenger RNA at the termination of protein biosynthesis. May increase the efficiency of translation by recycling ribosomes from one round of translation to another. In Coxiella burnetii (strain RSA 493 / Nine Mile phase I), this protein is Ribosome-recycling factor.